We begin with the raw amino-acid sequence, 494 residues long: MLRASATRFLSQAKNMNNSPRLFSSASAALQKFRAERDTFGDLQVPADRYWGAQTQRSLQNFDIGGPTERMPEPLIRAFGVLKKAAATVNMTYGLDPKVGEAIQKAADEVIDGSLIDHFPLVVWQTGSGTQTKMNVNEVISNRAIELLGGELGSKAPVHPNDHVNMSQSSNDTFPTAMHVAAVVEIHGRLIPALTTLRDALQAKSAEFEHIIKIGRTHLQDATPLTLGQEFSGYTQQLTYGIARVQGTLERLYNLAQGGTAVGTGLNTRKGFDAKVAEAIASITGLPFKTAPNKFEALAAHDALVEAHGALNTVACSLMKIANDIRYLGSGPRCGLGELSLPENEPGSSIMPGKVNPTQCEAMTMVCAQVMGNNTAISVAGSNGQFELNVFKPVMIKNLIQSIRLISDASISFTKNCVVGIEANEKKISSIMNESLMLVTALNPHIGYDKAAKCAKKAHKEGTTLKEAALSLGYLTSEEFDQWVRPEDMISAKD.

The transit peptide at 1–15 directs the protein to the mitochondrion; that stretch reads MLRASATRFLSQAKN. Residues 128–130, 159–162, 169–171, and threonine 217 contribute to the substrate site; these read SGT, HPND, and SSN. Histidine 218 functions as the Proton donor/acceptor in the catalytic mechanism. Serine 348 is a catalytic residue. Residues serine 349 and 354–356 contribute to the substrate site; that span reads KVN.

This sequence belongs to the class-II fumarase/aspartase family. Fumarase subfamily. As to quaternary structure, homotetramer.

It is found in the mitochondrion matrix. The protein resides in the cytoplasm. Its subcellular location is the nucleus. The catalysed reaction is (S)-malate = fumarate + H2O. The protein operates within carbohydrate metabolism; tricarboxylic acid cycle; (S)-malate from fumarate: step 1/1. Its function is as follows. Catalyzes the reversible stereospecific interconversion of fumarate to L-malate. In mitochondrion, catalyzes the hydration of fumarate to L-malate in the tricarboxylic acid (TCA) cycle to facilitate a transition step in the production of energy in the form of NADH. In cytoplasm and nucleus, involved in DNA repair in response to DNA damage: following DNA double-strand breaks (DSBs), translocates from the cytosol to the nucleus and promotes DNA repair by catalyzing the dehydration of L-malate to fumarate. The polypeptide is Fumarate hydratase, mitochondrial (Rhizopus oryzae (Mucormycosis agent)).